Reading from the N-terminus, the 502-residue chain is ATP synthase subunit alpha (502 aa).

169–176 (GDRQTGKT) serves as a coordination point for ATP.

This sequence belongs to the ATPase alpha/beta chains family. F-type ATPases have 2 components, CF(1) - the catalytic core - and CF(0) - the membrane proton channel. CF(1) has five subunits: alpha(3), beta(3), gamma(1), delta(1), epsilon(1). CF(0) has three main subunits: a(1), b(2) and c(9-12). The alpha and beta chains form an alternating ring which encloses part of the gamma chain. CF(1) is attached to CF(0) by a central stalk formed by the gamma and epsilon chains, while a peripheral stalk is formed by the delta and b chains.

The protein localises to the cell inner membrane. The enzyme catalyses ATP + H2O + 4 H(+)(in) = ADP + phosphate + 5 H(+)(out). Functionally, produces ATP from ADP in the presence of a proton gradient across the membrane. The alpha chain is a regulatory subunit. The chain is ATP synthase subunit alpha from Solidesulfovibrio magneticus (strain ATCC 700980 / DSM 13731 / RS-1) (Desulfovibrio magneticus).